Reading from the N-terminus, the 137-residue chain is Phosphoribosyl-AMP cyclohydrolase (137 aa).

Position 83 (aspartate 83) interacts with Mg(2+). Zn(2+) is bound at residue cysteine 84. Mg(2+)-binding residues include aspartate 85 and aspartate 87. Cysteine 101 and cysteine 108 together coordinate Zn(2+).

The protein belongs to the PRA-CH family. In terms of assembly, homodimer. Mg(2+) is required as a cofactor. Requires Zn(2+) as cofactor.

It localises to the cytoplasm. The catalysed reaction is 1-(5-phospho-beta-D-ribosyl)-5'-AMP + H2O = 1-(5-phospho-beta-D-ribosyl)-5-[(5-phospho-beta-D-ribosylamino)methylideneamino]imidazole-4-carboxamide. The protein operates within amino-acid biosynthesis; L-histidine biosynthesis; L-histidine from 5-phospho-alpha-D-ribose 1-diphosphate: step 3/9. In terms of biological role, catalyzes the hydrolysis of the adenine ring of phosphoribosyl-AMP. The protein is Phosphoribosyl-AMP cyclohydrolase of Burkholderia mallei (strain ATCC 23344).